The sequence spans 73 residues: MKKDIHPDYHMIDVKLTDGTVIQMKSTWGKEGDTLSLEIDPSSHPAWTGGSSRLMDTGGRVSKFKKKYEGLGF.

The protein belongs to the bacterial ribosomal protein bL31 family. Type A subfamily. Part of the 50S ribosomal subunit.

Functionally, binds the 23S rRNA. This chain is Large ribosomal subunit protein bL31 (rpmE), found in Ruegeria pomeroyi (strain ATCC 700808 / DSM 15171 / DSS-3) (Silicibacter pomeroyi).